A 161-amino-acid chain; its full sequence is PRS fimbrial major pilin protein (161 aa).

Belongs to the fimbrial protein family.

It is found in the secreted. Its subcellular location is the fimbrium. Functionally, fimbriae (also called pili), polar filaments radiating from the surface of the bacterium to a length of 0.5-1.5 micrometers and numbering 100-300 per cell, enable bacteria to colonize the epithelium of specific host organs. The chain is PRS fimbrial major pilin protein (prsA) from Escherichia coli.